Here is a 60-residue protein sequence, read N- to C-terminus: MSKGTPSRGKRQTQTHLTCRRCGRMSYHKRHKICSSCGFGRSTRMRSYGWITKRPKVATH.

Zn(2+) is bound by residues C19, C22, C34, and C37. The C4-type zinc-finger motif lies at 19 to 37 (CRRCGRMSYHKRHKICSSC).

It belongs to the eukaryotic ribosomal protein eL37 family. The cofactor is Zn(2+).

Its function is as follows. Binds to the 23S rRNA. The polypeptide is Large ribosomal subunit protein eL37 (Methanospirillum hungatei JF-1 (strain ATCC 27890 / DSM 864 / NBRC 100397 / JF-1)).